The following is a 111-amino-acid chain: CRIB domain-containing protein RIC2 (111 aa).

In terms of domain architecture, CRIB spans I71–G84.

Interacts with ARAC11/ROP1. Expressed in roots, leaves, stems, flowers, siliques and pollen.

The protein resides in the cell membrane. In terms of biological role, functions as a downstream effector of Rho-related GTP binding proteins of the 'Rho of Plants' (ROPs) family. Participates in the propagation of ROP GTPase signals in specific cellular responses. Is involved in pollen tube growth regulation through its interaction with ARAC11/ROP1. The sequence is that of CRIB domain-containing protein RIC2 (RIC2) from Arabidopsis thaliana (Mouse-ear cress).